Reading from the N-terminus, the 398-residue chain is Acetate kinase (398 aa).

A Mg(2+)-binding site is contributed by Asn7. Lys14 contacts ATP. Arg96 serves as a coordination point for substrate. The Proton donor/acceptor role is filled by Asp153. ATP is bound by residues 210 to 214, 284 to 286, and 332 to 336; these read HLGNG, DLR, and GIGEH. Glu385 provides a ligand contact to Mg(2+).

It belongs to the acetokinase family. In terms of assembly, homodimer. Mg(2+) serves as cofactor. Mn(2+) is required as a cofactor.

Its subcellular location is the cytoplasm. The enzyme catalyses acetate + ATP = acetyl phosphate + ADP. It participates in metabolic intermediate biosynthesis; acetyl-CoA biosynthesis; acetyl-CoA from acetate: step 1/2. Functionally, catalyzes the formation of acetyl phosphate from acetate and ATP. Can also catalyze the reverse reaction. The chain is Acetate kinase from Acaryochloris marina (strain MBIC 11017).